Consider the following 929-residue polypeptide: MTDYSKTVNLLESPFPMRGNLAKREPAWLKSWYEQKRYQKLREIAKGRPKFILHDGPPYANGDIHIGHAVNKILKDIIIRSKTQAGFDAPYVPGWDCHGLPIEVMVEKLHGKDMPKARFRELCREYAAEQIARQKKDFIRLGVLGDWDHPYLTMDFKTEADTVRMLGEIYKSGYLYRGAKPVQFCLDCGSSLAEAEVEYKDKVSPAIDVAYPFKDTAALAAAFGLAGIEGKAFAVIWTTTPWTLPASQAVSVGADVVYQLIDTPKGKLVLAKDLAEDALKRYGFSDGIAILAETTGDKLENLHMNHPFLERDIPMLNGDHVTTDAGTGLVHTAPAHGLEDYAVCNKYGIELYNPVNAEGRYIGETPRVAGMRVWEANPVILQWLEETGNLLASSKIEHSYAHCWRHKTPLIYRATGQWFVGMDKAGADGKTLRDKAIKAVDDTEFFPSWGRARLEAMIEGRPDWVVSRQRYWGTPMTFFVHKETGELHPNSAELLEKVALKIEEKGIEAWFSLDKSELLSAEDCENYDKLSDTMDVWFDSGSTHYSVVKQREELEWPADLYLEGSDQHRGWFQSSMLTGCASSMGRAPYKQLLTHGFVVDGEGKKMSKSIGNVVAPQEVYNEFGADILRLWAASTDYSGELAISKEILKRVTESYRRIRNTLSFLFANLSDFNPIEDAVQQADMVEIDRYALVLARRLQERLAGDYYPRYAFHFAVKEMVSFCSEDLGAFYLDILKDRLYTTKADSRARRSAQTALYHITRSLVLLIAPILCFTGEEAWDIIGGGEEDSVLFHTWHEFPTINEKTEAELVKKWTAIREAREAVTAAIEPLRADKTVGSSLQAEAEITAPEEMAGYLNALGEELRFAMLVSKAEVKVGSELAVAAKASDGEKCERCWHYTRDVGAVAGYETVCKRCAENVGGEGETRHYA.

The 'HIGH' region signature appears at 58-68; that stretch reads PYANGDIHIGH. E563 contacts L-isoleucyl-5'-AMP. Residues 605–609 carry the 'KMSKS' region motif; that stretch reads KMSKS. An ATP-binding site is contributed by K608. The Zn(2+) site is built by C892, C895, C912, and C915.

The protein belongs to the class-I aminoacyl-tRNA synthetase family. IleS type 1 subfamily. In terms of assembly, monomer. Zn(2+) serves as cofactor.

The protein localises to the cytoplasm. The catalysed reaction is tRNA(Ile) + L-isoleucine + ATP = L-isoleucyl-tRNA(Ile) + AMP + diphosphate. In terms of biological role, catalyzes the attachment of isoleucine to tRNA(Ile). As IleRS can inadvertently accommodate and process structurally similar amino acids such as valine, to avoid such errors it has two additional distinct tRNA(Ile)-dependent editing activities. One activity is designated as 'pretransfer' editing and involves the hydrolysis of activated Val-AMP. The other activity is designated 'posttransfer' editing and involves deacylation of mischarged Val-tRNA(Ile). The polypeptide is Isoleucine--tRNA ligase (Neisseria meningitidis serogroup C (strain 053442)).